A 264-amino-acid chain; its full sequence is Thymidylate synthase (264 aa).

R21 is a binding site for dUMP. Position 51 (H51) interacts with (6R)-5,10-methylene-5,6,7,8-tetrahydrofolate. 126-127 serves as a coordination point for dUMP; sequence RR. C146 functions as the Nucleophile in the catalytic mechanism. DUMP is bound by residues 166 to 169, N177, and 207 to 209; these read RSAD and HLY. D169 lines the (6R)-5,10-methylene-5,6,7,8-tetrahydrofolate pocket. A263 serves as a coordination point for (6R)-5,10-methylene-5,6,7,8-tetrahydrofolate.

Belongs to the thymidylate synthase family. Bacterial-type ThyA subfamily. In terms of assembly, homodimer.

It localises to the cytoplasm. It catalyses the reaction dUMP + (6R)-5,10-methylene-5,6,7,8-tetrahydrofolate = 7,8-dihydrofolate + dTMP. The protein operates within pyrimidine metabolism; dTTP biosynthesis. Catalyzes the reductive methylation of 2'-deoxyuridine-5'-monophosphate (dUMP) to 2'-deoxythymidine-5'-monophosphate (dTMP) while utilizing 5,10-methylenetetrahydrofolate (mTHF) as the methyl donor and reductant in the reaction, yielding dihydrofolate (DHF) as a by-product. This enzymatic reaction provides an intracellular de novo source of dTMP, an essential precursor for DNA biosynthesis. This is Thymidylate synthase from Ralstonia nicotianae (strain ATCC BAA-1114 / GMI1000) (Ralstonia solanacearum).